The following is a 298-amino-acid chain: MWAAGALKVRDCLAATSVTLRRCLKLGATMAKSKFEYVRDFEADDTCLPHCWVVVRLDGRNFHRFAEKHSFIKPNDSRALHLMTKCAQTVMNELEDIVIAYGQSDEYSFVFKRKSNWFKRRASKFMTHVVSQFASSYVFYWRDYFEDQPLLYPPGFDGRVIVYPSNQTLKDYLSWRQADCHINNLYNTVFWALVQQSGLTPLQAQERLQGTLAADKNEILFSEFNINYNNEPLMYRKGTVLIWQKVEEITTKEVKLPAEMEGKKMAVTRTRTMVVPLHCNIIGDAFWKEHPEILDEDS.

The Mg(2+) site is built by D58, G59, and D105. Residues 58–63 and 104–105 contribute to the GTP site; these read DGRNFH and SD.

It belongs to the tRNA(His) guanylyltransferase family. In terms of assembly, homotetramer. Interacts with MFN1 and MFN2; functions as a guanyl-nucleotide exchange factor/GEF for MFN2 and also probably MFN1. Mg(2+) serves as cofactor.

The protein localises to the cytoplasm. The protein resides in the mitochondrion. The catalysed reaction is a 5'-end ribonucleotide-tRNA(His) + GTP + ATP + H2O = a 5'-end phospho-guanosine-ribonucleotide-tRNA(His) + AMP + 2 diphosphate + H(+). Its function is as follows. Adds a GMP to the 5'-end of tRNA(His) after transcription and RNase P cleavage. This step is essential for proper recognition of the tRNA and for the fidelity of protein synthesis. Also functions as a guanyl-nucleotide exchange factor/GEF for the MFN1 and MFN2 mitofusins thereby regulating mitochondrial fusion. By regulating both mitochondrial dynamics and bioenergetic function, it contributes to cell survival following oxidative stress. The protein is Probable tRNA(His) guanylyltransferase (THG1L) of Bos taurus (Bovine).